The chain runs to 500 residues: Probable malate:quinone oxidoreductase (500 aa).

It belongs to the MQO family. Requires FAD as cofactor.

It carries out the reaction (S)-malate + a quinone = a quinol + oxaloacetate. The protein operates within carbohydrate metabolism; tricarboxylic acid cycle; oxaloacetate from (S)-malate (quinone route): step 1/1. The sequence is that of Probable malate:quinone oxidoreductase from Corynebacterium aurimucosum (strain ATCC 700975 / DSM 44827 / CIP 107346 / CN-1) (Corynebacterium nigricans).